A 178-amino-acid chain; its full sequence is Hypoxanthine phosphoribosyltransferase (178 aa).

2 residues coordinate diphosphate: arginine 43 and glycine 44. Residue glutamate 99 participates in GMP binding. Glutamate 99 contributes to the IMP binding site. Glutamate 99 and aspartate 100 together coordinate Mg(2+). The Proton acceptor role is filled by aspartate 103. GMP is bound by residues 103-108 (DSGNTL), lysine 131, and aspartate 159. IMP contacts are provided by residues 103-108 (DSGNTL) and lysine 131. A diphosphate-binding site is contributed by arginine 165.

Belongs to the purine/pyrimidine phosphoribosyltransferase family. As to quaternary structure, homotetramer. The cofactor is Mg(2+).

It localises to the cytoplasm. The catalysed reaction is IMP + diphosphate = hypoxanthine + 5-phospho-alpha-D-ribose 1-diphosphate. It catalyses the reaction GMP + diphosphate = guanine + 5-phospho-alpha-D-ribose 1-diphosphate. It participates in purine metabolism; IMP biosynthesis via salvage pathway; IMP from hypoxanthine: step 1/1. In terms of biological role, purine salvage pathway enzyme which catalyzes the transfer of the ribosyl-5-phosphate group from 5-phospho-alpha-D-ribose 1-diphosphate (PRPP) to the N9 position of hypoxanthine to yield IMP (inosine 5'-monophosphate). To a lesser extent, can also act on guanine leading to GMP, but shows a highly less efficient activity with xanthine. This Salmonella typhimurium (strain LT2 / SGSC1412 / ATCC 700720) protein is Hypoxanthine phosphoribosyltransferase (hpt).